A 282-amino-acid polypeptide reads, in one-letter code: Protease HtpX homolog (282 aa).

The next 2 helical transmembrane spans lie at 6–26 and 29–49; these read TLVL…LIGG and GATF…FFSH. Residue His130 coordinates Zn(2+). Glu131 is an active-site residue. His134 provides a ligand contact to Zn(2+). Transmembrane regions (helical) follow at residues 140 to 160 and 180 to 200; these read ILIS…AQMA and IVAL…QLAI. Glu205 contributes to the Zn(2+) binding site.

This sequence belongs to the peptidase M48B family. Zn(2+) serves as cofactor.

It is found in the cell inner membrane. The chain is Protease HtpX homolog from Thermodesulfovibrio yellowstonii (strain ATCC 51303 / DSM 11347 / YP87).